A 130-amino-acid polypeptide reads, in one-letter code: Protein ApaG (130 aa).

Positions 3–127 (KAETRGISVI…FSLDVPHMRR (125 aa)) constitute an ApaG domain.

The polypeptide is Protein ApaG (Methylobacterium nodulans (strain LMG 21967 / CNCM I-2342 / ORS 2060)).